The following is a 132-amino-acid chain: Vacuolar protein sorting-associated protein 55 homolog (132 aa).

A run of 4 helical transmembrane segments spans residues 7-27, 32-52, 68-88, and 98-118; these read VAALAFAGVVGLTFLVLGCAL, TWTPMFVITFYVLSPVPLLIA, LALFITTGIVISAFALPIVLA, and CFLVNTGSVIMFGTIIAYFYL.

This sequence belongs to the OB-RGRP/VPS55 family.

Its subcellular location is the endosome membrane. In terms of biological role, involved in endosomal protein transport. The protein is Vacuolar protein sorting-associated protein 55 homolog of Caenorhabditis elegans.